The primary structure comprises 461 residues: MIKVGILDSTLREGEQTPGVIFTVDQRVEIAKALSDLGVSMIEAGHPAVSPDIYEGIKRIVKLKKEGIITSEIVGHSRAVKRDIEIAAELEVDRIAIFYGVSDIHLKAKHKATREEALRVIAETISYARSHGVKVRFTAEDGSRTDFDFLVTVSRTARDAGADRVSIADTVGILYPSKTKELFSALIREVPNLEYDIHAHNDLGLAVANALAAVEGGATIVHATVNGLGERVGIVPLQQIVAAIKYHFGIEVVKLDKLQYVSSLIEKYSGIPMPPNYPITGDYAFLHKAGVHVAGVLSDPRTYEFMPPETFGRTRDYTIDKYTGKHALRDKYEKLGVKISEAEMDQILAKIKSNTTIRFYRDVDLLELAEEVTGRVLKPRPPEQIEALISVKCDSNVYTTSVTRRLSVINGVKEVMEISGDYDILVKVQAKDSNELNQIIESIRATKGVRSTLTSLVLKKM.

The Pyruvate carboxyltransferase domain maps to 4–259; the sequence is VGILDSTLRE…IEVVKLDKLQ (256 aa). 2-oxoglutarate is bound at residue Arg-12. Glu-13 contacts Mg(2+). Residues His-76, Arg-136, and Thr-170 each contribute to the 2-oxoglutarate site. Mg(2+) contacts are provided by His-198 and His-200. His-292 serves as the catalytic Proton acceptor.

This sequence belongs to the alpha-IPM synthase/homocitrate synthase family. Homocitrate synthase LYS20/LYS21 subfamily. The cofactor is Mg(2+). Requires Mn(2+) as cofactor.

It carries out the reaction acetyl-CoA + 2-oxoglutarate + H2O = (2R)-homocitrate + CoA + H(+). It functions in the pathway amino-acid biosynthesis; L-lysine biosynthesis via AAA pathway; L-alpha-aminoadipate from 2-oxoglutarate: step 1/5. Its function is as follows. Catalyzes the aldol-type condensation of 2-oxoglutarate with acetyl-CoA to yield homocitrate. Carries out the first step of the alpha-aminoadipate (AAA) lysine biosynthesis pathway. This is Homocitrate synthase from Saccharolobus solfataricus (strain ATCC 35092 / DSM 1617 / JCM 11322 / P2) (Sulfolobus solfataricus).